The primary structure comprises 370 residues: Aminomethyltransferase (370 aa).

The protein belongs to the GcvT family. The glycine cleavage system is composed of four proteins: P, T, L and H.

It carries out the reaction N(6)-[(R)-S(8)-aminomethyldihydrolipoyl]-L-lysyl-[protein] + (6S)-5,6,7,8-tetrahydrofolate = N(6)-[(R)-dihydrolipoyl]-L-lysyl-[protein] + (6R)-5,10-methylene-5,6,7,8-tetrahydrofolate + NH4(+). Functionally, the glycine cleavage system catalyzes the degradation of glycine. The chain is Aminomethyltransferase from Clostridium botulinum (strain Langeland / NCTC 10281 / Type F).